The sequence spans 142 residues: Small ribosomal subunit protein bS6 (142 aa).

The segment covering 110–133 (NKKPSHAKEKHEKTEHTHSHHTEE) has biased composition (basic and acidic residues). The tract at residues 110–142 (NKKPSHAKEKHEKTEHTHSHHTEEAESVGSHSE) is disordered.

The protein belongs to the bacterial ribosomal protein bS6 family.

Functionally, binds together with bS18 to 16S ribosomal RNA. This chain is Small ribosomal subunit protein bS6 (rpsF), found in Helicobacter pylori (strain ATCC 700392 / 26695) (Campylobacter pylori).